We begin with the raw amino-acid sequence, 918 residues long: UPF0182 protein CPF_0011 (918 aa).

A run of 7 helical transmembrane segments spans residues Thr-8–Ile-28, Leu-46–Ile-66, Phe-91–Trp-111, Ala-151–Phe-171, Leu-200–Tyr-220, Ile-243–Ile-263, and Ile-271–Phe-291. The span at Glu-857–Lys-869 shows a compositional bias: basic and acidic residues. Residues Glu-857–Asn-876 form a disordered region.

It belongs to the UPF0182 family.

Its subcellular location is the cell membrane. The polypeptide is UPF0182 protein CPF_0011 (Clostridium perfringens (strain ATCC 13124 / DSM 756 / JCM 1290 / NCIMB 6125 / NCTC 8237 / Type A)).